Here is a 313-residue protein sequence, read N- to C-terminus: MTQRVRIATRKSKLALWQAEHIQQRLEELHPGLSVELVPMSTKGDVILDTPLAKIGGKGLFVKELEVAMLEGRADIAVHSMKDLPVEFPPGLELHTICEREDPRDAFVSNNYKNLNELPEGAVVGTCSLRRRCQVKEQFPHLVIKDLRGNVQTRLRKLDEGEFDAIILAASGLIRLELGDRITSFIPVEQSLPANGQGALGIECRSDDDEMKALLAPLQCQETRTRVLAERAMNRGLDGGCQVPIGAYAELEGDEVYLRGLVGEPDGGKVLRDEVRGPASKAEELGSELAERLLKQGAAEILSAVYDSESSHS.

Residue C241 is modified to S-(dipyrrolylmethanemethyl)cysteine.

The protein belongs to the HMBS family. As to quaternary structure, monomer. Requires dipyrromethane as cofactor.

It carries out the reaction 4 porphobilinogen + H2O = hydroxymethylbilane + 4 NH4(+). It participates in porphyrin-containing compound metabolism; protoporphyrin-IX biosynthesis; coproporphyrinogen-III from 5-aminolevulinate: step 2/4. Its function is as follows. Tetrapolymerization of the monopyrrole PBG into the hydroxymethylbilane pre-uroporphyrinogen in several discrete steps. The polypeptide is Porphobilinogen deaminase (Idiomarina loihiensis (strain ATCC BAA-735 / DSM 15497 / L2-TR)).